The sequence spans 315 residues: C1GALT1-specific chaperone 1-like protein (315 aa).

Residues 1–8 lie on the Cytoplasmic side of the membrane; that stretch reads MVSASGTS. Residues 9–29 form a helical; Signal-anchor for type II membrane protein membrane-spanning segment; the sequence is FFKGMLLGSISWVLITMFGQI. At 30–315 the chain is on the lumenal side; it reads HIRHRGQTQD…FLPPVGSEND (286 aa). N-linked (GlcNAc...) asparagine glycosylation is found at Asn-55 and Asn-301.

Belongs to the glycosyltransferase 31 family. Beta3-Gal-T subfamily.

The protein localises to the membrane. The polypeptide is C1GALT1-specific chaperone 1-like protein (Homo sapiens (Human)).